An 84-amino-acid chain; its full sequence is Minor capsid protein P30 (84 aa).

Dimer.

It localises to the virion. Minor capsid protein essential for stable capsid assembly of complete particles. This is Minor capsid protein P30 (XXX) from Enterobacteria phage PRD1 (Bacteriophage PRD1).